A 419-amino-acid chain; its full sequence is Putative zinc metalloprotease SP_0263 (419 aa).

H18 serves as a coordination point for Zn(2+). E19 is a catalytic residue. H22 lines the Zn(2+) pocket. 3 helical membrane-spanning segments follow: residues 169–191 (LITNFAGPMNNFILGVVVFWVLI), 345–367 (ILYFLAMISINIGIFNLIPIPAL), and 388–410 (EIETYVTLAGVVIMVVLMIAVTW).

Belongs to the peptidase M50B family. Requires Zn(2+) as cofactor.

Its subcellular location is the cell membrane. The protein is Putative zinc metalloprotease SP_0263 of Streptococcus pneumoniae serotype 4 (strain ATCC BAA-334 / TIGR4).